Consider the following 1152-residue polypeptide: Integrin alpha-M (1152 aa).

The signal sequence occupies residues 1-16 (MALRVLLLTALTLCHG). The Extracellular segment spans residues 17–1104 (FNLDTENAMT…TKVEPFEVPN (1088 aa)). FG-GAP repeat units follow at residues 18-75 (NLDT…SCEP) and 76-135 (IRLQ…QQPQ). C66 and C73 are disulfide-bonded. A glycan (N-linked (GlcNAc...) asparagine) is linked at N86. C105 and C123 are disulfide-bonded. The VWFA domain occupies 150–328 (DIAFLIDGSG…EALKTIQNQL (179 aa)). The N-linked (GlcNAc...) asparagine glycan is linked to N240. FG-GAP repeat units follow at residues 339–390 (QTGS…STFI), 391–442 (NMTR…TGMW), 443–503 (ESNA…RARW), 506–564 (DAVL…SGIS), and 569–629 (QRIA…FNPR). Residue N391 is glycosylated (N-linked (GlcNAc...) asparagine). D465, D467, N469, D473, D529, N531, D533, D537, D592, D596, and D600 together coordinate Ca(2+). The N-linked (GlcNAc...) asparagine glycan is linked to N469. A disulfide bond links C654 and C711. N692, N696, and N734 each carry an N-linked (GlcNAc...) asparagine glycan. Cysteines 770 and 776 form a disulfide. Residue N801 is glycosylated (N-linked (GlcNAc...) asparagine). An intrachain disulfide couples C847 to C864. 8 N-linked (GlcNAc...) asparagine glycosylation sites follow: N880, N900, N911, N940, N946, N978, N993, and N1021. 2 disulfides stabilise this stretch: C998/C1022 and C1027/C1032. 3 N-linked (GlcNAc...) asparagine glycosylation sites follow: N1044, N1050, and N1075. The chain crosses the membrane as a helical span at residues 1105–1128 (PLPLIVGSSVGGLLLLALITAALY). Residues 1129–1152 (KLGFFKRQYKDMMSEGGPPGAEPQ) lie on the Cytoplasmic side of the membrane. The GFFKR motif motif lies at 1131-1135 (GFFKR).

Belongs to the integrin alpha chain family. In terms of assembly, heterodimer of an alpha and a beta subunit. ITGAM associates with ITGB2. Found in a complex with CD177 and ITGB2/CD18. Interacts with JAM3. Interacts with THBD. Interacts with complement factor H/CFH; this interaction mediates adhesion of neutrophils to pathogens leading to pathogen clearance. Interacts with TMEM268; this interaction inhibits ITGAM degradation via the endosome-lysosome pathway. In terms of tissue distribution, predominantly expressed in monocytes and granulocytes. Expressed in neutrophils (at protein level).

The protein localises to the cell membrane. The protein resides in the membrane raft. Integrin ITGAM/ITGB2 is implicated in various adhesive interactions of monocytes, macrophages and granulocytes as well as in mediating the uptake of complement-coated particles and pathogens. It is identical with CR-3, the receptor for the iC3b fragment of the third complement component. It probably recognizes the R-G-D peptide in C3b. Integrin ITGAM/ITGB2 is also a receptor for fibrinogen, factor X and ICAM1. It recognizes P1 and P2 peptides of fibrinogen gamma chain. Regulates neutrophil migration. In association with beta subunit ITGB2/CD18, required for CD177-PRTN3-mediated activation of TNF primed neutrophils. May regulate phagocytosis-induced apoptosis in extravasated neutrophils. May play a role in mast cell development. Required with TYROBP/DAP12 in microglia to control production of microglial superoxide ions which promote the neuronal apoptosis that occurs during brain development. This is Integrin alpha-M (ITGAM) from Homo sapiens (Human).